We begin with the raw amino-acid sequence, 339 residues long: Ketol-acid reductoisomerase (NADP(+)) (339 aa).

A KARI N-terminal Rossmann domain is found at 1 to 182 (MRVYYDRDAD…GGGRSGIIET (182 aa)). NADP(+) is bound by residues 24 to 27 (YGSQ), arginine 48, serine 51, threonine 53, and 83 to 86 (DELQ). The active site involves histidine 108. NADP(+) is bound at residue glycine 134. The region spanning 183 to 328 (SFREECETDL…EKLRAMMPWI (146 aa)) is the KARI C-terminal knotted domain. Mg(2+) is bound by residues aspartate 191, glutamate 195, glutamate 227, and glutamate 231. Serine 252 contributes to the substrate binding site.

The protein belongs to the ketol-acid reductoisomerase family. Requires Mg(2+) as cofactor.

It carries out the reaction (2R)-2,3-dihydroxy-3-methylbutanoate + NADP(+) = (2S)-2-acetolactate + NADPH + H(+). The enzyme catalyses (2R,3R)-2,3-dihydroxy-3-methylpentanoate + NADP(+) = (S)-2-ethyl-2-hydroxy-3-oxobutanoate + NADPH + H(+). It functions in the pathway amino-acid biosynthesis; L-isoleucine biosynthesis; L-isoleucine from 2-oxobutanoate: step 2/4. The protein operates within amino-acid biosynthesis; L-valine biosynthesis; L-valine from pyruvate: step 2/4. Involved in the biosynthesis of branched-chain amino acids (BCAA). Catalyzes an alkyl-migration followed by a ketol-acid reduction of (S)-2-acetolactate (S2AL) to yield (R)-2,3-dihydroxy-isovalerate. In the isomerase reaction, S2AL is rearranged via a Mg-dependent methyl migration to produce 3-hydroxy-3-methyl-2-ketobutyrate (HMKB). In the reductase reaction, this 2-ketoacid undergoes a metal-dependent reduction by NADPH to yield (R)-2,3-dihydroxy-isovalerate. This Paramagnetospirillum magneticum (strain ATCC 700264 / AMB-1) (Magnetospirillum magneticum) protein is Ketol-acid reductoisomerase (NADP(+)).